Consider the following 1026-residue polypeptide: Contactin-4 (1026 aa).

A signal peptide spans 1-18 (MRLPWELLVLQSFILCLA). 6 consecutive Ig-like C2-type domains span residues 32-117 (PSPV…AKLQ), 122-207 (DNFK…KVLG), 225-311 (PKIE…GQLT), 316-400 (PNWI…AELS), 406-493 (PDFS…GNLV), and 497-586 (PTRV…DRLS). 6 cysteine pairs are disulfide-bonded: C50-C100, C144-C194, C247-C295, C337-C384, C429-C477, and C519-C576. N-linked (GlcNAc...) asparagine glycans are attached at residues N65, N90, and N191. 3 N-linked (GlcNAc...) asparagine glycosylation sites follow: N370, N375, and N466. Fibronectin type-III domains follow at residues 599-697 (PPEA…TEEA), 702-799 (TPAN…SAEE), 804-899 (PPAS…TRKP), and 900-995 (PPSQ…ISNA). The interval 685–710 (PSRPSEKRRTEEALPEVTPANVSGGG) is disordered. Over residues 687 to 696 (RPSEKRRTEE) the composition is skewed to basic and acidic residues. N-linked (GlcNAc...) asparagine glycans are attached at residues N705, N764, N858, N893, N911, N929, and N954. Over residues 886-896 (GPSSATVNVTT) the composition is skewed to polar residues. The interval 886–907 (GPSSATVNVTTRKPPPSQPPGN) is disordered. S1000 carries the GPI-anchor amidated serine lipid modification. The propeptide at 1001–1026 (GASTSNACTLSAISTIMISLTARSSL) is removed in mature form.

This sequence belongs to the immunoglobulin superfamily. Contactin family. In terms of assembly, interacts with PTPRG. Mainly expressed in brain. Highly expressed in cerebellum and weakly expressed in corpus callosum, caudate nucleus, amygdala and spinal cord. Also expressed in testis, pancreas, thyroid, uterus, small intestine and kidney. Not expressed in skeletal muscle. Isoform 2 is weakly expressed in cerebral cortex.

It is found in the cell membrane. The protein localises to the secreted. Functionally, contactins mediate cell surface interactions during nervous system development. Has some neurite outgrowth-promoting activity. May be involved in synaptogenesis. In Homo sapiens (Human), this protein is Contactin-4 (CNTN4).